The primary structure comprises 872 residues: DNA mismatch repair protein MutS (872 aa).

Position 626–633 (626–633 (GPNMAGKS)) interacts with ATP.

This sequence belongs to the DNA mismatch repair MutS family.

Its function is as follows. This protein is involved in the repair of mismatches in DNA. It is possible that it carries out the mismatch recognition step. This protein has a weak ATPase activity. The chain is DNA mismatch repair protein MutS from Chlorobium phaeobacteroides (strain DSM 266 / SMG 266 / 2430).